A 486-amino-acid chain; its full sequence is Cardiolipin synthase A (486 aa).

The next 2 helical transmembrane spans lie at T3–V23 and M38–V58. PLD phosphodiesterase domains are found at residues M219 to R246 and E399 to S426. Residues H224, K226, D231, H404, K406, and D411 contribute to the active site.

The protein belongs to the phospholipase D family. Cardiolipin synthase subfamily. ClsA sub-subfamily.

It is found in the cell inner membrane. It carries out the reaction 2 a 1,2-diacyl-sn-glycero-3-phospho-(1'-sn-glycerol) = a cardiolipin + glycerol. In terms of biological role, catalyzes the reversible phosphatidyl group transfer from one phosphatidylglycerol molecule to another to form cardiolipin (CL) (diphosphatidylglycerol) and glycerol. In Salmonella arizonae (strain ATCC BAA-731 / CDC346-86 / RSK2980), this protein is Cardiolipin synthase A.